The sequence spans 436 residues: AMSH-like protease (436 aa).

Residue methionine 1 is modified to N-acetylmethionine. Phosphoserine occurs at positions 25 and 242. An MPN domain is found at 269 to 397 (VVLSRDLCHK…IFRLTNAGML (129 aa)). Positions 347, 349, 360, 362, 402, 408, and 410 each coordinate Zn(2+). The JAMM motif signature appears at 347-360 (HTHPTQTAFLSSVD).

This sequence belongs to the peptidase M67C family. Zn(2+) is required as a cofactor. Ubiquitously expressed. Isoform 1 is widely expressed while isoform 2 is testis-specific.

Its function is as follows. Zinc metalloprotease that specifically cleaves 'Lys-63'-linked polyubiquitin chains. Acts as a positive regulator of the TORC1 signaling pathway by mediating 'Lys-63'-linked deubiquitination of SESN2, thereby inhibiting SESN2-interaction with the GATOR2 complex. Does not cleave 'Lys-48'-linked polyubiquitin chains. The polypeptide is AMSH-like protease (Stambpl1) (Mus musculus (Mouse)).